A 140-amino-acid polypeptide reads, in one-letter code: 3-hydroxyacyl-[acyl-carrier-protein] dehydratase FabZ (140 aa).

H47 is a catalytic residue.

The protein belongs to the thioester dehydratase family. FabZ subfamily.

The protein resides in the cytoplasm. It carries out the reaction a (3R)-hydroxyacyl-[ACP] = a (2E)-enoyl-[ACP] + H2O. Involved in unsaturated fatty acids biosynthesis. Catalyzes the dehydration of short chain beta-hydroxyacyl-ACPs and long chain saturated and unsaturated beta-hydroxyacyl-ACPs. This is 3-hydroxyacyl-[acyl-carrier-protein] dehydratase FabZ from Streptococcus pneumoniae (strain 70585).